We begin with the raw amino-acid sequence, 819 residues long: LPS-assembly protein LptD (819 aa).

The first 33 residues, Met1 to Ala33, serve as a signal peptide directing secretion.

The protein belongs to the LptD family. Component of the lipopolysaccharide transport and assembly complex. Interacts with LptE and LptA.

The protein localises to the cell outer membrane. Its function is as follows. Together with LptE, is involved in the assembly of lipopolysaccharide (LPS) at the surface of the outer membrane. This Acinetobacter baylyi (strain ATCC 33305 / BD413 / ADP1) protein is LPS-assembly protein LptD.